A 196-amino-acid chain; its full sequence is Glutathione-specific gamma-glutamylcyclotransferase 1 (196 aa).

15–20 is a substrate binding site; that stretch reads IFGYGS. The active-site Proton acceptor is Glu95.

Belongs to the gamma-glutamylcyclotransferase family. ChaC subfamily.

Its subcellular location is the cytoplasm. It is found in the cytosol. It localises to the golgi apparatus. The protein resides in the trans-Golgi network. The catalysed reaction is glutathione = L-cysteinylglycine + 5-oxo-L-proline. Functionally, catalyzes the cleavage of glutathione into 5-oxo-L-proline and a Cys-Gly dipeptide. Acts specifically on glutathione, but not on other gamma-glutamyl peptides. Glutathione depletion is an important factor for apoptosis initiation and execution. Acts as a pro-apoptotic component of the unfolded protein response pathway by mediating the pro-apoptotic effects of the ATF4-ATF3-DDIT3/CHOP cascade. Negative regulator of Notch signaling pathway involved in embryonic neurogenesis: acts by inhibiting Notch cleavage by furin, maintaining Notch in an immature inactive form, thereby promoting neurogenesis in embryos. In Danio rerio (Zebrafish), this protein is Glutathione-specific gamma-glutamylcyclotransferase 1.